The chain runs to 492 residues: Ribose import ATP-binding protein RbsA (492 aa).

2 ABC transporter domains span residues 3–239 (IDMR…VGRK) and 238–492 (RKLE…TGGK). 35–42 (GENGAGKS) is a binding site for ATP.

The protein belongs to the ABC transporter superfamily. Ribose importer (TC 3.A.1.2.1) family. As to quaternary structure, the complex is composed of an ATP-binding protein (RbsA), two transmembrane proteins (RbsC) and a solute-binding protein (RbsB).

It is found in the cell membrane. It carries out the reaction D-ribose(out) + ATP + H2O = D-ribose(in) + ADP + phosphate + H(+). Functionally, part of the ABC transporter complex RbsABC involved in ribose import. Responsible for energy coupling to the transport system. The sequence is that of Ribose import ATP-binding protein RbsA from Streptococcus agalactiae serotype V (strain ATCC BAA-611 / 2603 V/R).